We begin with the raw amino-acid sequence, 373 residues long: Chaperone protein DnaJ (373 aa).

Residues 4 to 68 (NYYQILGVSK…QKRAAYDRLG (65 aa)) enclose the J domain. The CR-type zinc finger occupies 136 to 214 (GIEKNINFSS…CHGMGRYHKQ (79 aa)). 8 residues coordinate Zn(2+): C149, C152, C166, C169, C188, C191, C202, and C205. CXXCXGXG motif repeat units lie at residues 149-156 (CDTCHGSG), 166-173 (CDACSGVG), 188-195 (CHKCQGNG), and 202-209 (CKKCHGMG).

Belongs to the DnaJ family. In terms of assembly, homodimer. Requires Zn(2+) as cofactor.

It is found in the cytoplasm. Its function is as follows. Participates actively in the response to hyperosmotic and heat shock by preventing the aggregation of stress-denatured proteins and by disaggregating proteins, also in an autonomous, DnaK-independent fashion. Unfolded proteins bind initially to DnaJ; upon interaction with the DnaJ-bound protein, DnaK hydrolyzes its bound ATP, resulting in the formation of a stable complex. GrpE releases ADP from DnaK; ATP binding to DnaK triggers the release of the substrate protein, thus completing the reaction cycle. Several rounds of ATP-dependent interactions between DnaJ, DnaK and GrpE are required for fully efficient folding. Also involved, together with DnaK and GrpE, in the DNA replication of plasmids through activation of initiation proteins. This Rickettsia rickettsii (strain Iowa) protein is Chaperone protein DnaJ.